Here is a 344-residue protein sequence, read N- to C-terminus: Phosphate acyltransferase (344 aa).

This sequence belongs to the PlsX family. In terms of assembly, homodimer. Probably interacts with PlsY.

The protein resides in the cytoplasm. The enzyme catalyses a fatty acyl-[ACP] + phosphate = an acyl phosphate + holo-[ACP]. Its pathway is lipid metabolism; phospholipid metabolism. Catalyzes the reversible formation of acyl-phosphate (acyl-PO(4)) from acyl-[acyl-carrier-protein] (acyl-ACP). This enzyme utilizes acyl-ACP as fatty acyl donor, but not acyl-CoA. The protein is Phosphate acyltransferase of Actinobacillus pleuropneumoniae serotype 5b (strain L20).